A 591-amino-acid chain; its full sequence is Lysyl oxidase homolog 1 (591 aa).

Positions 1 to 22 (MALALTGWQLVWGACVCVLVHG) are cleaved as a signal peptide. A propeptide spanning residues 23-91 (QQAPPGQGSD…PRRRGGLRRR (69 aa)) is cleaved from the precursor. Disordered stretches follow at residues 77-107 (APQA…SDTV) and 233-373 (EYGG…RLSV). Residues 82–92 (PRRRGGLRRRQ) are compositionally biased toward basic residues. The segment covering 298–313 (NGGGGGGTYGGGGGDP) has biased composition (gly residues). The interval 319-386 (PPYGNMPPEA…YRPNQNGRGL (68 aa)) is interaction with FBLN5. Residues 387-591 (PDLVPDPNYV…STTNCKIVQS (205 aa)) are lysyl-oxidase like. Disulfide bonds link cysteine 412–cysteine 418, cysteine 465–cysteine 514, cysteine 498–cysteine 504, cysteine 525–cysteine 535, and cysteine 572–cysteine 586. Residues histidine 466, histidine 468, and histidine 470 each contribute to the Cu cation site. A cross-link (lysine tyrosylquinone (Lys-Tyr)) is located at residues 494-529 (KASFCLEDSTCDFGNLKRYACTSHTQGLSPGCYDTY). At tyrosine 529 the chain carries 2',4',5'-topaquinone.

The protein belongs to the lysyl oxidase family. In terms of assembly, interacts (via propeptide) with EFEMP2. Interacts with FBLN5. The cofactor is Cu cation. Requires lysine tyrosylquinone residue as cofactor. In terms of processing, the lysine tyrosylquinone cross-link (LTQ) is generated by condensation of the epsilon-amino group of a lysine with a topaquinone produced by oxidation of tyrosine. Proteolytic processing by a furin-like protease causes removal of N-terminal propeptide resulting in an enzyme largely inactive, but further proteolytic processing by BMP1 results in enzyme activation.

The protein resides in the secreted. It localises to the extracellular space. It is found in the extracellular matrix. The enzyme catalyses L-lysyl-[protein] + O2 + H2O = (S)-2-amino-6-oxohexanoyl-[protein] + H2O2 + NH4(+). Catalyzes the oxidative deamination of lysine and hydroxylysine residues in collagen and elastin, resulting in the formation of covalent cross-linkages, and the stabilization of collagen and elastin fibers. Essential for the elastic fiber homeostasis and for their maintenance at adult age. This chain is Lysyl oxidase homolog 1 (LOXL1), found in Bos taurus (Bovine).